Here is a 365-residue protein sequence, read N- to C-terminus: Fructose-1,6-bisphosphatase class 1 2 (365 aa).

Mg(2+) is bound by residues E100, D122, L124, and D125. Substrate-binding positions include 125–128 and N221; that span reads DGSS. E293 lines the Mg(2+) pocket.

It belongs to the FBPase class 1 family. Homotetramer. Mg(2+) is required as a cofactor.

It is found in the cytoplasm. It carries out the reaction beta-D-fructose 1,6-bisphosphate + H2O = beta-D-fructose 6-phosphate + phosphate. It functions in the pathway carbohydrate biosynthesis; gluconeogenesis. The sequence is that of Fructose-1,6-bisphosphatase class 1 2 from Cupriavidus metallidurans (strain ATCC 43123 / DSM 2839 / NBRC 102507 / CH34) (Ralstonia metallidurans).